The following is a 160-amino-acid chain: SsrA-binding protein (160 aa).

The disordered stretch occupies residues 131-160; sequence KKEYDKRHTERERDSDRELQRAVRTKGKDD.

The protein belongs to the SmpB family.

The protein localises to the cytoplasm. Required for rescue of stalled ribosomes mediated by trans-translation. Binds to transfer-messenger RNA (tmRNA), required for stable association of tmRNA with ribosomes. tmRNA and SmpB together mimic tRNA shape, replacing the anticodon stem-loop with SmpB. tmRNA is encoded by the ssrA gene; the 2 termini fold to resemble tRNA(Ala) and it encodes a 'tag peptide', a short internal open reading frame. During trans-translation Ala-aminoacylated tmRNA acts like a tRNA, entering the A-site of stalled ribosomes, displacing the stalled mRNA. The ribosome then switches to translate the ORF on the tmRNA; the nascent peptide is terminated with the 'tag peptide' encoded by the tmRNA and targeted for degradation. The ribosome is freed to recommence translation, which seems to be the essential function of trans-translation. The polypeptide is SsrA-binding protein (Pseudomonas syringae pv. tomato (strain ATCC BAA-871 / DC3000)).